The following is a 528-amino-acid chain: Peptide chain release factor 3 (528 aa).

Positions 10–278 (DRRRTFGIIS…AFVQMAPPPH (269 aa)) constitute a tr-type G domain. GTP-binding positions include 19–26 (SHPDAGKT), 87–91 (DTPGH), and 141–144 (NKLD).

The protein belongs to the TRAFAC class translation factor GTPase superfamily. Classic translation factor GTPase family. PrfC subfamily.

It is found in the cytoplasm. Functionally, increases the formation of ribosomal termination complexes and stimulates activities of RF-1 and RF-2. It binds guanine nucleotides and has strong preference for UGA stop codons. It may interact directly with the ribosome. The stimulation of RF-1 and RF-2 is significantly reduced by GTP and GDP, but not by GMP. The protein is Peptide chain release factor 3 of Syntrophobacter fumaroxidans (strain DSM 10017 / MPOB).